A 2082-amino-acid chain; its full sequence is MRRAMRDGGKPDRIGAAAPLRRAPLTATSGIDMNVQESIFPITPNGFAGHSMDDLMQRWLLAQLQATGILADGRAHAFDALAGRVQPLYRRWLEESLRLLRDAGLVRDDAQGWRAAERAPIDARDAQRHWDASRDAWLADRERAVYVVLIEAVLAQLPAILTGRRRATDVLFPNGSMARVQGVYTGNHVSDHFNRVLVDHAVRYVAGCAARRADAKLRFIEVGAGTGGTTEGLLAALAPHARHVGEYCFTDISKAFLNHAQRRFGEGAPFFGARVLDIEQPIDAQGFEPGAYDALVATNVLHATRDIRTTLRHCKALLKHNGLLFINEMTGSVPYLHLTFGMLEGWWRFTDDALRVAGCPAVAPQTWDRVLREEGFSSVIFPARDAHGQGQQIVIAQNDARRAGSARRDARASNGDAQHGARHEAAHDAQQDASGDTQADAHDSAHDSAHDSAHDSAHDSAHDSAHAAAALRREGRAYLRARAAELLGMPAGAIDPDEGLHAYGLDSILASQFAAQLAEAFDGFDGALLFEHKTINALLDHLLAAHADALARLLPPAGGAPARGVGARAQAAQASGEGRAAPPAAPHADARSDTPSSAPSSAPARPDQPAPSGPPAQPAQPAPRADTPPPAASAGHRGEARASDTRYAPRAPHPDAAAEPVAIIGISGRYPGAYDVPAFWRNLLAGACAITEVPAERWDWRAHYRADAAEAAREGKSYSKWGGFVDDVGRFDPAFFGMTPQDAQHTDPQELLFLEMCWHALQDAGQTPALLPGDVRRRAGVFAAITKHYAFPPTSFASLANRVSHALDFGGKSLAIDTMCSSSLVAVNEAWEYLQRDGRLAVVGGVNLYLDPQQYAHLSRFRFASSGPVCKAFGEGGDGFVPGEGAGAIVLKRLSDAERDGDPIHAVIRGCAVNHNGRSTSFTASDPARQADVVRDALTRAGVDPRTIGYVEAAANGHAMGDAIEMTGLGKVFAACDGVSGTRAIGSVKANIGHCEAASGMSQLTKVVMAMRDGVLAPTLRDGTRNPNIAFERLPFEVQEQAAPWRRLIVDGSEVPRRAGVTSIGGGGVNAHVVLEEYVAPPRAARPGAGTDDEVLFVLSARTREQLGAYAERWAGYLEAHPDCDVDAIAHTVRTAREPMAHRLAVLAHGRGELAALLRGWAAGGAASGAASGAASDQVFYGDVKQHRVVLSDALVQAARREGAASLAKLWVLGNALGAAHGADEPAPRRVGLLPPYPFERRLVWTSAHAPGTRHASAGEATEAAEAAEAAEAGAAAVAESAEAGAPAAAGDARLQPAPASNAEAFYSLSTLNASKDFQEQYLTLCPFPERIPGFSMTRMFIEPQKYPNEFALMQARQIEMRQVLFGREHFERISRVLDIGCGMGTDVIQLAKRFAHLRTTGYTITRAQAELGAGRIAREGLQGRAEIRHGDSAKDPFPGKYDLVIGIEVICHIQDKHGVFGNIARSLDDDGHVLLMDFVANGRGRISSPEIDIDIGTRQDWIDVAAAHGLVVDEVIDVSPQIANFLHDPEHERNIAALPGVAQASFRNFANTCVSLEKGWVSYCLLRLSKASRLSEAERRRLNAERFGASVAYPDALKAMHARGPAPYPRSPDAQPPAARAQAGVDGGVEASAPAGVKADSKAGPKSEVKSDAAARASRADIAASVAASVAASVEDAFEASLGLRRADLERADDLRALGIGSIQAVMLAEAINERLDLALPSRFVLEHATFGALVRAVAEAVAGGRGSSRDAPARELAYLSLLEPGGAMTAELLELPGGARAEILRGGRGPRVVLIPGLGMAGTVFRDLCRALTRRHEVIVYHYPGLGRSDPVAPIDVDAAAAHLYRTLDACGGDGAAALLGWSFGGVIAQRAALMRPRAWRALVLVNTLGAYRPLAPQFLTPGASRDGEPRGLGGLYQTDLDFVFAGDAPPAALARKDACAALMRDSLALDAAQAIDYLDALVRFDATAQLPSLRMPTLVVAGTADHFGDPAHAEQLVSLIPNARLARIAGAGHAVFLTHGEAFEPAVLAFLDETLRAAEAGGAAESVESVEATEAAEAARSPAVARRRATDDAPVGSDA.

The interval 398–468 (NDARRAGSAR…DSAHDSAHAA (71 aa)) is disordered. 3 stretches are compositionally biased toward basic and acidic residues: residues 399–411 (DARR…RDAR), 419–430 (HGARHEAAHDAQ), and 439–468 (ADAH…AHAA). Residues 470 to 546 (ALRREGRAYL…ALLDHLLAAH (77 aa)) form the Carrier 1 domain. Serine 507 carries the O-(pantetheine 4'-phosphoryl)serine modification. Composition is skewed to low complexity over residues 560-582 (APAR…RAAP) and 593-605 (DTPS…APAR). The interval 560 to 655 (APARGVGARA…RYAPRAPHPD (96 aa)) is disordered. A compositionally biased stretch (pro residues) spans 606-631 (PDQPAPSGPPAQPAQPAPRADTPPPA). The Ketosynthase family 3 (KS3) domain maps to 658–1077 (AEPVAIIGIS…GVNAHVVLEE (420 aa)). Disordered regions lie at residues 1250 to 1269 (APGT…EAAE) and 1603 to 1653 (ARGP…VKSD). 2 stretches are compositionally biased toward low complexity: residues 1256–1269 (ASAG…EAAE) and 1612–1624 (SPDA…RAQA). Residues 1640 to 1653 (ADSKAGPKSEVKSD) are compositionally biased toward basic and acidic residues. Residues 1669–1743 (ASVAASVEDA…ALVRAVAEAV (75 aa)) form the Carrier 2 domain. O-(pantetheine 4'-phosphoryl)serine is present on serine 1703. The AB hydrolase-1 domain occupies 1792 to 2022 (PRVVLIPGLG…GAGHAVFLTH (231 aa)). The span at 2045 to 2067 (GAAESVESVEATEAAEAARSPAV) shows a compositional bias: low complexity. A disordered region spans residues 2045–2082 (GAAESVESVEATEAAEAARSPAVARRRATDDAPVGSDA).

Pantetheine 4'-phosphate serves as cofactor.

The protein resides in the cytoplasm. Its pathway is antibiotic biosynthesis. Its function is as follows. Involved in production of the polyketide antibiotic thailandamide. This is Polyketide synthase ThaQ from Burkholderia thailandensis (strain ATCC 700388 / DSM 13276 / CCUG 48851 / CIP 106301 / E264).